The primary structure comprises 347 residues: Heat-inducible transcription repressor HrcA (347 aa).

It belongs to the HrcA family.

In terms of biological role, negative regulator of class I heat shock genes (grpE-dnaK-dnaJ and groELS operons). Prevents heat-shock induction of these operons. The sequence is that of Heat-inducible transcription repressor HrcA from Sorangium cellulosum (strain So ce56) (Polyangium cellulosum (strain So ce56)).